The following is a 372-amino-acid chain: MKYDLIIIGSGSVGAAAGYYATRAGLNVLMTDAHMPPHQHGSHHGDTRLIRHAYGEGEKYVPLVLRAQMLWDELSRHNEDDPIFVRSGVINLGPADSAFLANVAHSAEQWQLNVEKLDAQGIMARWPEIRVPDNYIGLFETDSGFLRSELAIKTWIQLAKEAGCAQLFNCPVTAIRHDDDGVTIETADGEYQAKKAIVCAGTWVKDLLPELPVQPVRKVFAWYQADGRYSVKNKFPAFTGELPNGDQYYGFPAENDALKIGKHNGGQIIHSADERVPFAEVVSDGSEAFPFLRNVLPGIGCCLYGAACTYDNSPDEDFIIDTLPAHDNTLLITGLSGHGFKFASVLGEIAADFAQDKKSDFDLTPFRLSRFQ.

4–34 (DLIIIGSGSVGAAAGYYATRAGLNVLMTDAH) contacts FAD. Cysteine 308 bears the S-8alpha-FAD cysteine mark.

It belongs to the MSOX/MTOX family. MTOX subfamily. Monomer. The cofactor is FAD.

It catalyses the reaction N(alpha)-methyl-L-tryptophan + O2 + H2O = L-tryptophan + formaldehyde + H2O2. In terms of biological role, catalyzes the oxidative demethylation of N-methyl-L-tryptophan. In Escherichia coli O7:K1 (strain IAI39 / ExPEC), this protein is N-methyl-L-tryptophan oxidase.